Reading from the N-terminus, the 705-residue chain is Polyribonucleotide nucleotidyltransferase (705 aa).

D486 and D492 together coordinate Mg(2+). Positions 553 to 612 (PRIYTMKINPEKIKDVIGKGGSVIRALTDETGTTIEIEDDGTIKIAATDGDKAKHAIRRI) constitute a KH domain. In terms of domain architecture, S1 motif spans 622-690 (GRIYAGKVTR…RQGRIRLSIK (69 aa)).

The protein belongs to the polyribonucleotide nucleotidyltransferase family. In terms of assembly, component of the RNA degradosome, which is a multiprotein complex involved in RNA processing and mRNA degradation. Mg(2+) is required as a cofactor.

The protein resides in the cytoplasm. It catalyses the reaction RNA(n+1) + phosphate = RNA(n) + a ribonucleoside 5'-diphosphate. Functionally, involved in mRNA degradation. Catalyzes the phosphorolysis of single-stranded polyribonucleotides processively in the 3'- to 5'-direction. The polypeptide is Polyribonucleotide nucleotidyltransferase (Yersinia pestis bv. Antiqua (strain Nepal516)).